The chain runs to 80 residues: DNA-binding protein HU-like (80 aa).

It belongs to the bacterial histone-like protein family.

Histone-like DNA-binding protein which is capable of wrapping DNA to stabilize it, and thus to prevent its denaturation under extreme environmental conditions. In Rickettsia prowazekii (strain Madrid E), this protein is DNA-binding protein HU-like.